The primary structure comprises 136 residues: Large ribosomal subunit protein uL16 (136 aa).

The protein belongs to the universal ribosomal protein uL16 family. In terms of assembly, part of the 50S ribosomal subunit.

Its function is as follows. Binds 23S rRNA and is also seen to make contacts with the A and possibly P site tRNAs. This is Large ribosomal subunit protein uL16 from Elusimicrobium minutum (strain Pei191).